We begin with the raw amino-acid sequence, 316 residues long: Ornithine carbamoyltransferase (316 aa).

Residues serine 57–threonine 60, glutamine 84, arginine 108, and histidine 135–glutamine 138 contribute to the carbamoyl phosphate site. L-ornithine contacts are provided by residues asparagine 166, aspartate 230, and serine 234–methionine 235. Residues cysteine 269 to leucine 270 and arginine 297 each bind carbamoyl phosphate.

The protein belongs to the aspartate/ornithine carbamoyltransferase superfamily. OTCase family.

Its subcellular location is the cytoplasm. The enzyme catalyses carbamoyl phosphate + L-ornithine = L-citrulline + phosphate + H(+). Its pathway is amino-acid biosynthesis; L-arginine biosynthesis; L-arginine from L-ornithine and carbamoyl phosphate: step 1/3. Its function is as follows. Reversibly catalyzes the transfer of the carbamoyl group from carbamoyl phosphate (CP) to the N(epsilon) atom of ornithine (ORN) to produce L-citrulline. The chain is Ornithine carbamoyltransferase from Bacillus cereus (strain ZK / E33L).